The sequence spans 211 residues: Small ribosomal subunit protein uS4 (211 aa).

A disordered region spans residues 27-48 (GRKVLERRGSQPPGQHGASVRR). The region spanning 99–162 (RRLDNVVFRL…RKRDYFKDLE (64 aa)) is the S4 RNA-binding domain.

The protein belongs to the universal ribosomal protein uS4 family. As to quaternary structure, part of the 30S ribosomal subunit. Contacts protein S5. The interaction surface between S4 and S5 is involved in control of translational fidelity.

Its function is as follows. One of the primary rRNA binding proteins, it binds directly to 16S rRNA where it nucleates assembly of the body of the 30S subunit. In terms of biological role, with S5 and S12 plays an important role in translational accuracy. The polypeptide is Small ribosomal subunit protein uS4 (Herpetosiphon aurantiacus (strain ATCC 23779 / DSM 785 / 114-95)).